We begin with the raw amino-acid sequence, 552 residues long: ATP synthase subunit alpha (552 aa).

An ATP-binding site is contributed by 173 to 180; that stretch reads GDRQTGKS. Residues 509-552 are disordered; that stretch reads KPQFSGGSKGSNVPKDVDAGATDADDISQEKITTRKGGATAARG.

Belongs to the ATPase alpha/beta chains family. As to quaternary structure, F-type ATPases have 2 components, CF(1) - the catalytic core - and CF(0) - the membrane proton channel. CF(1) has five subunits: alpha(3), beta(3), gamma(1), delta(1), epsilon(1). CF(0) has three main subunits: a(1), b(2) and c(9-12). The alpha and beta chains form an alternating ring which encloses part of the gamma chain. CF(1) is attached to CF(0) by a central stalk formed by the gamma and epsilon chains, while a peripheral stalk is formed by the delta and b chains.

The protein resides in the cell membrane. The enzyme catalyses ATP + H2O + 4 H(+)(in) = ADP + phosphate + 5 H(+)(out). In terms of biological role, produces ATP from ADP in the presence of a proton gradient across the membrane. The alpha chain is a regulatory subunit. The polypeptide is ATP synthase subunit alpha (Kineococcus radiotolerans (strain ATCC BAA-149 / DSM 14245 / SRS30216)).